Consider the following 77-residue polypeptide: ATP synthase subunit c (77 aa).

2 consecutive transmembrane segments (helical) span residues 13–33 and 55–75; these read IATVGYGLAAIGPGIGVGIVA and FLGIAFSEALALIGLATYFIF.

This sequence belongs to the ATPase C chain family. F-type ATPases have 2 components, F(1) - the catalytic core - and F(0) - the membrane proton channel. F(1) has five subunits: alpha(3), beta(3), gamma(1), delta(1), epsilon(1). F(0) has three main subunits: a(1), b(2) and c(10-14). The alpha and beta chains form an alternating ring which encloses part of the gamma chain. F(1) is attached to F(0) by a central stalk formed by the gamma and epsilon chains, while a peripheral stalk is formed by the delta and b chains.

Its subcellular location is the cell membrane. Its function is as follows. F(1)F(0) ATP synthase produces ATP from ADP in the presence of a proton or sodium gradient. F-type ATPases consist of two structural domains, F(1) containing the extramembraneous catalytic core and F(0) containing the membrane proton channel, linked together by a central stalk and a peripheral stalk. During catalysis, ATP synthesis in the catalytic domain of F(1) is coupled via a rotary mechanism of the central stalk subunits to proton translocation. In terms of biological role, key component of the F(0) channel; it plays a direct role in translocation across the membrane. A homomeric c-ring of between 10-14 subunits forms the central stalk rotor element with the F(1) delta and epsilon subunits. The polypeptide is ATP synthase subunit c (Clavibacter michiganensis subsp. michiganensis (strain NCPPB 382)).